An 81-amino-acid chain; its full sequence is ATP synthase subunit c, chloroplastic (81 aa).

2 consecutive transmembrane segments (helical) span residues 3 to 23 and 57 to 77; these read PLIS…ASIG and LAFM…LLFA.

It belongs to the ATPase C chain family. F-type ATPases have 2 components, F(1) - the catalytic core - and F(0) - the membrane proton channel. F(1) has five subunits: alpha(3), beta(3), gamma(1), delta(1), epsilon(1). F(0) has four main subunits: a(1), b(1), b'(1) and c(10-14). The alpha and beta chains form an alternating ring which encloses part of the gamma chain. F(1) is attached to F(0) by a central stalk formed by the gamma and epsilon chains, while a peripheral stalk is formed by the delta, b and b' chains.

Its subcellular location is the plastid. The protein localises to the chloroplast thylakoid membrane. Functionally, f(1)F(0) ATP synthase produces ATP from ADP in the presence of a proton or sodium gradient. F-type ATPases consist of two structural domains, F(1) containing the extramembraneous catalytic core and F(0) containing the membrane proton channel, linked together by a central stalk and a peripheral stalk. During catalysis, ATP synthesis in the catalytic domain of F(1) is coupled via a rotary mechanism of the central stalk subunits to proton translocation. Its function is as follows. Key component of the F(0) channel; it plays a direct role in translocation across the membrane. A homomeric c-ring of between 10-14 subunits forms the central stalk rotor element with the F(1) delta and epsilon subunits. The protein is ATP synthase subunit c, chloroplastic of Gossypium barbadense (Sea Island cotton).